A 35-amino-acid polypeptide reads, in one-letter code: U1-theraphotoxin-Hhn1a (35 aa).

Intrachain disulfides connect C2–C16, C9–C21, and C15–C28.

The protein belongs to the neurotoxin 10 (Hwtx-1) family. 24 (Hwtx-6) subfamily. In terms of tissue distribution, expressed by the venom gland.

It is found in the secreted. Functionally, gating-modifier toxin that dose-dependently inhibits inactivation of voltage-gated sodium channels and reduces the peak of sodium current in cockroach DUM neurons. In vivo, reversibly paralyzes cockroaches for several hours, paralyzes rat after intracerebroventricular injection and blocks the neuromuscular transmission of the isolated rat phrenic nerve-diaphragm preparation. The protein is U1-theraphotoxin-Hhn1a of Cyriopagopus hainanus (Chinese bird spider).